A 396-amino-acid chain; its full sequence is Queuine tRNA-ribosyltransferase catalytic subunit 1 (396 aa).

Asp-99 serves as the catalytic Proton acceptor. Queuine-binding positions include 99–103, Asp-153, Gln-196, and Gly-223; that span reads DSGGF. The tract at residues 254-260 is RNA binding; the sequence is GVGYATD. Asp-273 serves as the catalytic Nucleophile. The segment at 278 to 282 is RNA binding; important for wobble base 34 recognition; sequence TRTAR. Zn(2+) contacts are provided by Cys-311, Cys-313, Cys-316, and His-341.

The protein belongs to the queuine tRNA-ribosyltransferase family. In terms of assembly, heterodimer of a catalytic subunit qtrt1 and an accessory subunit qtrt2. It depends on Zn(2+) as a cofactor.

The protein resides in the cytoplasm. It is found in the mitochondrion outer membrane. It carries out the reaction guanosine(34) in tRNA + queuine = queuosine(34) in tRNA + guanine. Its function is as follows. Catalytic subunit of the queuine tRNA-ribosyltransferase (TGT) that catalyzes the base-exchange of a guanine (G) residue with queuine (Q) at position 34 (anticodon wobble position) in tRNAs with GU(N) anticodons (tRNA-Asp, -Asn, -His and -Tyr), resulting in the hypermodified nucleoside queuosine (7-(((4,5-cis-dihydroxy-2-cyclopenten-1-yl)amino)methyl)-7-deazaguanosine). Catalysis occurs through a double-displacement mechanism. The nucleophile active site attacks the C1' of nucleotide 34 to detach the guanine base from the RNA, forming a covalent enzyme-RNA intermediate. The proton acceptor active site deprotonates the incoming queuine, allowing a nucleophilic attack on the C1' of the ribose to form the product. The sequence is that of Queuine tRNA-ribosyltransferase catalytic subunit 1 from Xenopus laevis (African clawed frog).